The following is a 264-amino-acid chain: GTP cyclohydrolase FolE2 (264 aa).

This sequence belongs to the GTP cyclohydrolase IV family.

It catalyses the reaction GTP + H2O = 7,8-dihydroneopterin 3'-triphosphate + formate + H(+). The protein operates within cofactor biosynthesis; 7,8-dihydroneopterin triphosphate biosynthesis; 7,8-dihydroneopterin triphosphate from GTP: step 1/1. Functionally, converts GTP to 7,8-dihydroneopterin triphosphate. The protein is GTP cyclohydrolase FolE2 of Vesicomyosocius okutanii subsp. Calyptogena okutanii (strain HA).